The primary structure comprises 165 residues: uncharacterized protein (165 aa).

The chain crosses the membrane as a helical span at residues 10–27 (VSLTIVFVLFFSADVSLT).

The protein localises to the membrane. This is an uncharacterized protein from Saccharomyces cerevisiae (strain ATCC 204508 / S288c) (Baker's yeast).